Consider the following 220-residue polypeptide: MSTGTANSAVSSKSTNSTTSTSKVPVNEKSNNSQNANTSTASIIKSYREIVNDPKNLDEAANYLYQSLLDDAVVGVFLEIHHLRKTGNLTAMDGVNEDESETSFRIVDMPNFDIFGISTAKKPMDCTCPNCDRPVSAARFAPHLEKCMGMGRISSRIASRRLATKESNSASSSSSSSYLQTTNAGSDDEDDVDWSSEKRRKKSSQNSRNNGSKKNNGKTF.

A disordered region spans residues 1 to 38 (MSTGTANSAVSSKSTNSTTSTSKVPVNEKSNNSQNANT). Residues 126–147 (CTCPNCDRPVSAARFAPHLEKC) form an SGF11-type zinc finger. Low complexity-rich tracts occupy residues 160–177 (RRLATKESNSASSSSSSS) and 204–220 (SQNSRNNGSKKNNGKTF). The interval 160 to 220 (RRLATKESNS…GSKKNNGKTF (61 aa)) is disordered.

This sequence belongs to the SGF11 family. In terms of assembly, component of some SAGA transcription coactivator-HAT complexes. Within the SAGA complex, participates in a subcomplex of SAGA called the DUB module (deubiquitination module).

It localises to the nucleus. In terms of biological role, component of the transcription regulatory histone acetylation (HAT) complex SAGA, a multiprotein complex that activates transcription by remodeling chromatin and mediating histone acetylation and deubiquitination. Within the SAGA complex, participates in a subcomplex that specifically deubiquitinates histone H2B. The SAGA complex is recruited to specific gene promoters by activators, where it is required for transcription. The chain is SAGA-associated factor 11 homolog from Musca domestica (House fly).